Consider the following 110-residue polypeptide: QVRPFLEVHERSACQARETLVSILQEYPDEISDIFRPSCVAVLRCSGCCTDESLKCTPVGKHTVDLQIMRVNPRTQSSKMEVMKFTEHTACECRPRRKQGEPDGPKEKPR.

Gln1 bears the Pyrrolidone carboxylic acid mark. Disulfide bonds link Cys14–Cys56, Cys45–Cys91, and Cys49–Cys93.

The protein belongs to the PDGF/VEGF growth factor family. Snake venom VEGF subfamily. Homodimer; disulfide-linked. Interacts with VEGF receptor-2 (KDR) with high affinity. In terms of tissue distribution, expressed by the venom gland.

The protein resides in the secreted. Snake venom VEGFs that may contribute to venom dispersion and prey subjugation by inducing vascular permeability and hypotension. This protein induces an increase in capillary permeability after intradermal injection, as well as a drastic hypotensive effect after intravenous injection. The hypotension is mediated by nitric oxide (NO), which is produced by VEGF-activated endothelium NO synthase. Also induces angiogenesis in vitro, probably through VEGF receptor (KDR/VEGFR-2) signaling. The chain is Snake venom vascular endothelial growth factor toxin HF from Vipera aspis aspis (Aspic viper).